The sequence spans 642 residues: Hemagglutinin-esterase-fusion glycoprotein (642 aa).

Ala-1 is a signal peptide. The segment at 2-27 (EKIKICLQKQANSSFSLHNGFGGNLY) is fusion domain-1. Topologically, residues 2 to 617 (EKIKICLQKQ…QSDPFYWGSS (616 aa)) are extracellular. 7 cysteine pairs are disulfide-bonded: Cys-7–Cys-570, Cys-107–Cys-152, Cys-127–Cys-175, Cys-197–Cys-239, Cys-216–Cys-303, Cys-224–Cys-276, and Cys-333–Cys-339. Residues Asn-13 and Asn-48 are each glycosylated (N-linked (GlcNAc...) asparagine; by host). Positions 28 to 138 (ATEEKRMFEL…RKNWTDIKLN (111 aa)) are esterase domain-1. The active-site Nucleophile is the Ser-58. Asn-131 carries an N-linked (GlcNAc...) asparagine; by host glycan. Residues 138 to 297 (NFQKNIYELA…VRSSPRFLLM (160 aa)) form an N-acetyl-9-O-acetylneuraminic acid binding region. The segment at 298 to 352 (PERSYCFDMKEKGLVTAVQSVWGKGRKSDYAVDQACLSTPGCMLIQKQKPYIGEA) is esterase domain-2. Catalysis depends on charge relay system residues Asp-353 and His-356. The interval 353-638 (DDHHGDQEMR…AALAISGIAI (286 aa)) is fusion domain-2. N-linked (GlcNAc...) asparagine; by host glycosylation occurs at Asn-382. The chain crosses the membrane as a helical span at residues 618–638 (LGLAITTPISLAALAISGIAI). At 639–642 (CRTK) the chain is on the cytoplasmic side.

It belongs to the influenza type C/coronaviruses hemagglutinin-esterase family. As to quaternary structure, homotrimer of disulfide-linked HEF1-HEF2. In natural infection, inactive HEF is matured into HEF1 and HEF2 outside the cell by one or more trypsin-like, arginine-specific endoprotease.

It is found in the virion membrane. The protein localises to the host cell membrane. It carries out the reaction N-acetyl-9-O-acetylneuraminate + H2O = N-acetylneuraminate + acetate + H(+). The enzyme catalyses N-acetyl-4-O-acetylneuraminate + H2O = N-acetylneuraminate + acetate + H(+). Functionally, binds to the N-acetyl-9-O-acetylneuraminic acid residues on the cell surface, bringing about the attachment of the virus particle to the cell. Plays a major role in the determination of host range restriction and virulence. Class I viral fusion protein. Responsible for penetration of the virus into the cell cytoplasm by mediating the fusion of the membrane of the endocytosed virus particle with the endosomal membrane. Low pH in endosomes induce an irreversible conformational change in HEF2, releasing the fusion hydrophobic peptide. Several trimers are required to form a competent fusion pore. Displays a receptor-destroying activity which is a neuraminidate-O-acetyl esterase. This activity cleaves off any receptor on the cell surface, which would otherwise prevent virions release. These cleavages prevent self-aggregation and ensure the efficient spread of the progeny virus from cell to cell. In Influenza C virus (strain C/Great lakes/1167/1954), this protein is Hemagglutinin-esterase-fusion glycoprotein (HE).